Reading from the N-terminus, the 824-residue chain is Leucine--tRNA ligase (824 aa).

Positions 42–52 (PYPSGHLHMGH) match the 'HIGH' region motif. Positions 581 to 585 (KMSKS) match the 'KMSKS' region motif. Residue Lys-584 coordinates ATP.

The protein belongs to the class-I aminoacyl-tRNA synthetase family.

Its subcellular location is the cytoplasm. The catalysed reaction is tRNA(Leu) + L-leucine + ATP = L-leucyl-tRNA(Leu) + AMP + diphosphate. The protein is Leucine--tRNA ligase of Syntrophomonas wolfei subsp. wolfei (strain DSM 2245B / Goettingen).